Consider the following 339-residue polypeptide: Fructose-1,6-bisphosphatase class 1 (339 aa).

Mg(2+) is bound by residues glutamate 94, aspartate 116, leucine 118, and aspartate 119. Substrate-binding positions include 119–122, asparagine 210, and lysine 276; that span reads DGSS. Glutamate 282 provides a ligand contact to Mg(2+).

Belongs to the FBPase class 1 family. Homotetramer. The cofactor is Mg(2+).

It is found in the cytoplasm. It catalyses the reaction beta-D-fructose 1,6-bisphosphate + H2O = beta-D-fructose 6-phosphate + phosphate. It functions in the pathway carbohydrate biosynthesis; gluconeogenesis. In Burkholderia ambifaria (strain ATCC BAA-244 / DSM 16087 / CCUG 44356 / LMG 19182 / AMMD) (Burkholderia cepacia (strain AMMD)), this protein is Fructose-1,6-bisphosphatase class 1.